Here is a 370-residue protein sequence, read N- to C-terminus: Myomodulin neuropeptides 1 (370 aa).

Positions 1 to 18 (MQVYMLLPLAVFASLTYQ) are cleaved as a signal peptide. Residues 19–50 (GACEETAAAQTSSDASTSSASSEHAENELSRA) constitute a propeptide that is removed on maturation. Low complexity predominate over residues 28-40 (QTSSDASTSSASS). The segment at 28–52 (QTSSDASTSSASSEHAENELSRAKR) is disordered. Leucine amide occurs at positions 60 and 69. A propeptide spanning residues 73 to 190 (GGPVEPESEE…EPEEGGLGEE (118 aa)) is cleaved from the precursor. Leucine amide is present on residues Leu199 and Leu209. Basic and acidic residues predominate over residues 210 to 226 (GKREGEEGDEMDKKQDE). Residues 210-230 (GKREGEEGDEMDKKQDESLND) form a disordered region. Positions 213 to 237 (EGEEGDEMDKKQDESLNDDFENDDI) are excised as a propeptide. Residues Leu246, Leu256, Leu266, Leu276, Leu286, Leu296, Leu306, Leu316, Leu326, Leu336, and Leu346 each carry the leucine amide modification. Positions 344–370 (LRLGKRDDDEKEKKSLNMSRLGKRSTQ) are disordered. Basic and acidic residues predominate over residues 347–358 (GKRDDDEKEKKS). A propeptide spanning residues 350–355 (DDDEKE) is cleaved from the precursor. Leu364 is modified (leucine amide). Positions 368–370 (STQ) are excised as a propeptide.

In terms of tissue distribution, expressed in all ganglia of the CNS, but only in a subset of neurons including L10 in the abdominal ganglion and B16 in the buccal ganglion.

It localises to the secreted. In terms of biological role, exogenous application of myomodulins potentiates ARC muscle contraction. In Aplysia californica (California sea hare), this protein is Myomodulin neuropeptides 1 (MYOMOD1).